The following is a 147-amino-acid chain: MNGSIRKMMRVTCGMLLMVMSGVSQAAELHLESRGGSGTQLRDGAKVATGRIICREAHTGFHVWMNERQVDGRAERYVVQSKDGRHELRVRTGGDGWSPVKGEGGKGVSRPGQEEQVFFDVMADGNQDIAPGEYRFSVGGACVVPQE.

Residues 1–26 form the signal peptide; sequence MNGSIRKMMRVTCGMLLMVMSGVSQA. Residues 91 to 111 are disordered; that stretch reads RTGGDGWSPVKGEGGKGVSRP.

The protein to E.coli AggB.

This chain is Protein AfaD (afaD), found in Escherichia coli.